The following is a 397-amino-acid chain: Protein WRKY1 (397 aa).

The WRKY DNA-binding region spans 326–392 (KVADIPADEF…YEGDHNHNRV (67 aa)).

This sequence belongs to the WRKY group II-d family. In terms of assembly, interacts with RS2. In terms of tissue distribution, more abundant in apices and young leaf primordia than in fully expanded leaf tissues.

Its subcellular location is the nucleus. Functionally, transcription factor. Interacts specifically with the W box (5'-(T)TGAC[CT]-3'), a frequently occurring elicitor-responsive cis-acting element. In Zea mays (Maize), this protein is Protein WRKY1.